Reading from the N-terminus, the 719-residue chain is Phosphoribosylformylglycinamidine synthase subunit PurL (719 aa).

H47 is an active-site residue. ATP is bound by residues Y50 and K89. E91 contributes to the Mg(2+) binding site. Substrate is bound by residues 92 to 95 (SHNH) and R114. The Proton acceptor role is filled by H93. Mg(2+) is bound at residue D115. A substrate-binding site is contributed by Q238. D266 is a Mg(2+) binding site. 310–312 (ESQ) contributes to the substrate binding site. ATP is bound by residues D488 and G525. N526 is a Mg(2+) binding site. Substrate is bound at residue S528.

Belongs to the FGAMS family. Monomer. Part of the FGAM synthase complex composed of 1 PurL, 1 PurQ and 2 PurS subunits.

It is found in the cytoplasm. It catalyses the reaction N(2)-formyl-N(1)-(5-phospho-beta-D-ribosyl)glycinamide + L-glutamine + ATP + H2O = 2-formamido-N(1)-(5-O-phospho-beta-D-ribosyl)acetamidine + L-glutamate + ADP + phosphate + H(+). Its pathway is purine metabolism; IMP biosynthesis via de novo pathway; 5-amino-1-(5-phospho-D-ribosyl)imidazole from N(2)-formyl-N(1)-(5-phospho-D-ribosyl)glycinamide: step 1/2. Functionally, part of the phosphoribosylformylglycinamidine synthase complex involved in the purines biosynthetic pathway. Catalyzes the ATP-dependent conversion of formylglycinamide ribonucleotide (FGAR) and glutamine to yield formylglycinamidine ribonucleotide (FGAM) and glutamate. The FGAM synthase complex is composed of three subunits. PurQ produces an ammonia molecule by converting glutamine to glutamate. PurL transfers the ammonia molecule to FGAR to form FGAM in an ATP-dependent manner. PurS interacts with PurQ and PurL and is thought to assist in the transfer of the ammonia molecule from PurQ to PurL. This is Phosphoribosylformylglycinamidine synthase subunit PurL from Roseobacter denitrificans (strain ATCC 33942 / OCh 114) (Erythrobacter sp. (strain OCh 114)).